We begin with the raw amino-acid sequence, 166 residues long: Small ribosomal subunit protein uS5 (166 aa).

The region spanning leucine 11–valine 74 is the S5 DRBM domain.

This sequence belongs to the universal ribosomal protein uS5 family. In terms of assembly, part of the 30S ribosomal subunit. Contacts proteins S4 and S8.

With S4 and S12 plays an important role in translational accuracy. In terms of biological role, located at the back of the 30S subunit body where it stabilizes the conformation of the head with respect to the body. This Idiomarina loihiensis (strain ATCC BAA-735 / DSM 15497 / L2-TR) protein is Small ribosomal subunit protein uS5.